Reading from the N-terminus, the 687-residue chain is DNA ligase (687 aa).

NAD(+)-binding positions include 33-37 (DAEFD), 83-84 (SL), and glutamate 113. Lysine 115 acts as the N6-AMP-lysine intermediate in catalysis. Positions 136, 176, 292, and 316 each coordinate NAD(+). Zn(2+) contacts are provided by cysteine 410, cysteine 413, cysteine 429, and cysteine 435. A BRCT domain is found at 599–687 (SVPRTLAGVT…GPPAEVGEPT (89 aa)).

Belongs to the NAD-dependent DNA ligase family. LigA subfamily. Requires Mg(2+) as cofactor. Mn(2+) is required as a cofactor.

The enzyme catalyses NAD(+) + (deoxyribonucleotide)n-3'-hydroxyl + 5'-phospho-(deoxyribonucleotide)m = (deoxyribonucleotide)n+m + AMP + beta-nicotinamide D-nucleotide.. Functionally, DNA ligase that catalyzes the formation of phosphodiester linkages between 5'-phosphoryl and 3'-hydroxyl groups in double-stranded DNA using NAD as a coenzyme and as the energy source for the reaction. It is essential for DNA replication and repair of damaged DNA. In Mycobacterium marinum (strain ATCC BAA-535 / M), this protein is DNA ligase.